A 408-amino-acid chain; its full sequence is AA9 family lytic polysaccharide monooxygenase A (408 aa).

Residues 1–20 form the signal peptide; sequence MKTTTYSLLALAAASKLASA. The Cu(2+) site is built by His21 and His103. Cys63 and Cys186 are joined by a disulfide. The N-linked (GlcNAc...) asparagine glycan is linked to Asn151. Position 172 (His172) interacts with O2. Residue Tyr183 participates in Cu(2+) binding. N-linked (GlcNAc...) asparagine glycosylation is found at Asn331 and Asn381. The CBM1 domain maps to 369 to 405; sequence GVAKQYERCGGINHTGPTTCESGSVCKKWNPYYYQCV.

The protein belongs to the polysaccharide monooxygenase AA9 family. The cofactor is Cu(2+).

Its subcellular location is the secreted. The enzyme catalyses [(1-&gt;4)-beta-D-glucosyl]n+m + reduced acceptor + O2 = 4-dehydro-beta-D-glucosyl-[(1-&gt;4)-beta-D-glucosyl]n-1 + [(1-&gt;4)-beta-D-glucosyl]m + acceptor + H2O.. In terms of biological role, lytic polysaccharide monooxygenase (LPMO) that depolymerizes crystalline and amorphous polysaccharides via the oxidation of scissile alpha- or beta-(1-4)-glycosidic bonds, yielding C4 oxidation products. Catalysis by LPMOs requires the reduction of the active-site copper from Cu(II) to Cu(I) by a reducing agent and H(2)O(2) or O(2) as a cosubstrate. In Aspergillus kawachii (strain NBRC 4308) (White koji mold), this protein is AA9 family lytic polysaccharide monooxygenase A (eglD).